The chain runs to 266 residues: MPKGKKAKGKKVAPAPSVAKKHEAKKVVNPLFEKRPKNFGIGQDIQPKRDLTRFVKWPRYIRLQRQRSILYKRLKVPPAINQFTQALDRQTATQLFKLAHKYRPETKQEKKKRLLARAEQKAAGKGDAPTKRPPVLRAGVNTITSLVENKKAQLVVIAHDVDPIELVIFLPALCRKMGVPYCIVKGKARLGRLVHRKTCTSVAFTQTNPEDKGALAKLVEAIKTNYNDRYEEIRRHWGGGILGPKSTARINKLEKAKAKELATKLG.

The span at 1–11 (MPKGKKAKGKK) shows a compositional bias: basic residues. 2 disordered regions span residues 1–28 (MPKG…KKVV) and 105–134 (ETKQ…KRPP). Residues 116 to 130 (ARAEQKAAGKGDAPT) are compositionally biased toward basic and acidic residues.

This sequence belongs to the eukaryotic ribosomal protein eL8 family. Component of the large ribosomal subunit.

Its subcellular location is the cytoplasm. Component of the large ribosomal subunit. The ribosome is a large ribonucleoprotein complex responsible for the synthesis of proteins in the cell. This is Large ribosomal subunit protein eL8 (rpl7a) from Takifugu rubripes (Japanese pufferfish).